The sequence spans 229 residues: Enolase-phosphatase E1 (229 aa).

This sequence belongs to the HAD-like hydrolase superfamily. MasA/MtnC family. In terms of assembly, monomer. The cofactor is Mg(2+).

It catalyses the reaction 5-methylsulfanyl-2,3-dioxopentyl phosphate + H2O = 1,2-dihydroxy-5-(methylsulfanyl)pent-1-en-3-one + phosphate. It functions in the pathway amino-acid biosynthesis; L-methionine biosynthesis via salvage pathway; L-methionine from S-methyl-5-thio-alpha-D-ribose 1-phosphate: step 3/6. It participates in amino-acid biosynthesis; L-methionine biosynthesis via salvage pathway; L-methionine from S-methyl-5-thio-alpha-D-ribose 1-phosphate: step 4/6. Functionally, bifunctional enzyme that catalyzes the enolization of 2,3-diketo-5-methylthiopentyl-1-phosphate (DK-MTP-1-P) into the intermediate 2-hydroxy-3-keto-5-methylthiopentenyl-1-phosphate (HK-MTPenyl-1-P), which is then dephosphorylated to form the acireductone 1,2-dihydroxy-3-keto-5-methylthiopentene (DHK-MTPene). This Serratia proteamaculans (strain 568) protein is Enolase-phosphatase E1.